The following is a 115-amino-acid chain: Cytochrome c oxidase subunit 3 (115 aa).

A run of 2 helical transmembrane segments spans residues 32–52 (CLQGLLFTVLLGLYFSFLQGL) and 70–90 (FFLATGFHGLHVLIGTIFLMI).

It belongs to the cytochrome c oxidase subunit 3 family. Component of the cytochrome c oxidase (complex IV, CIV), a multisubunit enzyme composed of a catalytic core of 3 subunits and several supernumerary subunits. The complex exists as a monomer or a dimer and forms supercomplexes (SCs) in the inner mitochondrial membrane with ubiquinol-cytochrome c oxidoreductase (cytochrome b-c1 complex, complex III, CIII).

Its subcellular location is the mitochondrion inner membrane. The catalysed reaction is 4 Fe(II)-[cytochrome c] + O2 + 8 H(+)(in) = 4 Fe(III)-[cytochrome c] + 2 H2O + 4 H(+)(out). Its function is as follows. Component of the cytochrome c oxidase, the last enzyme in the mitochondrial electron transport chain which drives oxidative phosphorylation. The respiratory chain contains 3 multisubunit complexes succinate dehydrogenase (complex II, CII), ubiquinol-cytochrome c oxidoreductase (cytochrome b-c1 complex, complex III, CIII) and cytochrome c oxidase (complex IV, CIV), that cooperate to transfer electrons derived from NADH and succinate to molecular oxygen, creating an electrochemical gradient over the inner membrane that drives transmembrane transport and the ATP synthase. Cytochrome c oxidase is the component of the respiratory chain that catalyzes the reduction of oxygen to water. Electrons originating from reduced cytochrome c in the intermembrane space (IMS) are transferred via the dinuclear copper A center (CU(A)) of subunit 2 and heme A of subunit 1 to the active site in subunit 1, a binuclear center (BNC) formed by heme A3 and copper B (CU(B)). The BNC reduces molecular oxygen to 2 water molecules using 4 electrons from cytochrome c in the IMS and 4 protons from the mitochondrial matrix. This Artemia salina (Brine shrimp) protein is Cytochrome c oxidase subunit 3 (COIII).